A 217-amino-acid chain; its full sequence is Phosphoribosylformylglycinamidine synthase subunit PurQ (217 aa).

The Glutamine amidotransferase type-1 domain occupies 2 to 217 (NIGIIVFPGS…GKSILSTLLS (216 aa)). Residue C86 is the Nucleophile of the active site. Active-site residues include H194 and E196.

In terms of assembly, part of the FGAM synthase complex composed of 1 PurL, 1 PurQ and 2 PurS subunits.

It is found in the cytoplasm. The catalysed reaction is N(2)-formyl-N(1)-(5-phospho-beta-D-ribosyl)glycinamide + L-glutamine + ATP + H2O = 2-formamido-N(1)-(5-O-phospho-beta-D-ribosyl)acetamidine + L-glutamate + ADP + phosphate + H(+). The enzyme catalyses L-glutamine + H2O = L-glutamate + NH4(+). The protein operates within purine metabolism; IMP biosynthesis via de novo pathway; 5-amino-1-(5-phospho-D-ribosyl)imidazole from N(2)-formyl-N(1)-(5-phospho-D-ribosyl)glycinamide: step 1/2. Its function is as follows. Part of the phosphoribosylformylglycinamidine synthase complex involved in the purines biosynthetic pathway. Catalyzes the ATP-dependent conversion of formylglycinamide ribonucleotide (FGAR) and glutamine to yield formylglycinamidine ribonucleotide (FGAM) and glutamate. The FGAM synthase complex is composed of three subunits. PurQ produces an ammonia molecule by converting glutamine to glutamate. PurL transfers the ammonia molecule to FGAR to form FGAM in an ATP-dependent manner. PurS interacts with PurQ and PurL and is thought to assist in the transfer of the ammonia molecule from PurQ to PurL. The polypeptide is Phosphoribosylformylglycinamidine synthase subunit PurQ (Prochlorococcus marinus (strain NATL2A)).